Consider the following 597-residue polypeptide: Elongation factor 4 (597 aa).

Residues 4–181 (SKIRNFSIIA…EIVDKISYPI (178 aa)) enclose the tr-type G domain. GTP contacts are provided by residues 16 to 21 (DHGKST) and 128 to 131 (NKID).

The protein belongs to the TRAFAC class translation factor GTPase superfamily. Classic translation factor GTPase family. LepA subfamily.

The protein resides in the cell membrane. It catalyses the reaction GTP + H2O = GDP + phosphate + H(+). Required for accurate and efficient protein synthesis under certain stress conditions. May act as a fidelity factor of the translation reaction, by catalyzing a one-codon backward translocation of tRNAs on improperly translocated ribosomes. Back-translocation proceeds from a post-translocation (POST) complex to a pre-translocation (PRE) complex, thus giving elongation factor G a second chance to translocate the tRNAs correctly. Binds to ribosomes in a GTP-dependent manner. The chain is Elongation factor 4 from Mycoplasmopsis pulmonis (strain UAB CTIP) (Mycoplasma pulmonis).